The sequence spans 167 residues: uncharacterized protein (167 aa).

2 DED domains span residues 2 to 75 (DLKT…NLFQ) and 93 to 167 (THVL…AKTV).

This is an uncharacterized protein from Saimiriine herpesvirus 2 (strain 11) (SaHV-2).